Here is a 138-residue protein sequence, read N- to C-terminus: uncharacterized protein (138 aa).

Phosphoserine is present on Ser110.

The protein localises to the cytoplasm. It localises to the nucleus. This is an uncharacterized protein from Schizosaccharomyces pombe (strain 972 / ATCC 24843) (Fission yeast).